Reading from the N-terminus, the 551-residue chain is Mesoderm induction early response protein 3 (551 aa).

Low complexity predominate over residues methionine 1–serine 16. Disordered regions lie at residues methionine 1–glycine 62 and leucine 113–proline 169. A compositionally biased stretch (basic and acidic residues) spans serine 17 to glutamate 36. Phosphoserine is present on residues serine 52, serine 53, and serine 114. A compositionally biased stretch (polar residues) spans glutamine 121–histidine 134. Acidic residues predominate over residues lysine 154–threonine 163. A Phosphoserine modification is found at serine 156. Residue threonine 163 is modified to Phosphothreonine. Serine 165 and serine 168 each carry phosphoserine. The region spanning arginine 174 to glycine 273 is the ELM2 domain. Positions glutamate 278 to arginine 330 constitute an SANT domain.

The protein resides in the nucleus. In terms of biological role, transcriptional repressor. The polypeptide is Mesoderm induction early response protein 3 (Mier3) (Mus musculus (Mouse)).